Here is an 824-residue protein sequence, read N- to C-terminus: FT-interacting protein 1 (824 aa).

C2 domains lie at 48-170, 217-341, and 385-522; these read WLGL…PQWY, VRGE…SRWF, and YISD…THAY. Helical transmembrane passes span 625 to 645, 657 to 677, and 764 to 784; these read AVSL…VCHW, LLLI…LYMF, and ATCL…VTPF.

It belongs to the MCTP family. Interacts with RFT1 and PI4KG4. Specifically expressed in the phloem including companion cells.

Its subcellular location is the endoplasmic reticulum membrane. In terms of biological role, involved in the export of the long day-specific flower-promoting signal (florigen) RFT1 from the phloem companion cells to sieve elements. Promotes flowering under long days through the transport of RFT1 from the leaves to the shoot apical meristem (SAM). This chain is FT-interacting protein 1, found in Oryza sativa subsp. japonica (Rice).